Reading from the N-terminus, the 227-residue chain is MADS-box transcription factor 25 (227 aa).

The MADS-box domain maps to 1 to 61 (MGRGKIAIKR…GRLYDFSSSS (61 aa)). The region spanning 86-176 (AKFWQREVTT…RKKFNIAHQR (91 aa)) is the K-box domain. The interval 183–227 (KLNSGESTSSEQVTRSSKDPGESSTPRDSRVCIDLELSQKEVEDE) is disordered. Residues 186 to 197 (SGESTSSEQVTR) show a composition bias toward polar residues. Basic and acidic residues predominate over residues 198 to 227 (SSKDPGESSTPRDSRVCIDLELSQKEVEDE).

As to expression, expressed in seedling roots.

It is found in the nucleus. Its function is as follows. Probable transcription factor. The sequence is that of MADS-box transcription factor 25 (MADS25) from Oryza sativa subsp. japonica (Rice).